Consider the following 268-residue polypeptide: Small ribosomal subunit protein uS10m (268 aa).

The N-terminal 64 residues, 1-64 (MIIRPVVRSL…RITTTTEAPK (64 aa)), are a transit peptide targeting the mitochondrion.

The protein belongs to the universal ribosomal protein uS10 family. In terms of assembly, component of the mitochondrial small ribosomal subunit (mt-SSU). Mature N.crassa 74S mitochondrial ribosomes consist of a small (37S) and a large (54S) subunit. The 37S small subunit contains a 16S ribosomal RNA (16S mt-rRNA) and 32 different proteins. The 54S large subunit contains a 23S rRNA (23S mt-rRNA) and 42 different proteins.

Its subcellular location is the mitochondrion. Functionally, component of the mitochondrial ribosome (mitoribosome), a dedicated translation machinery responsible for the synthesis of mitochondrial genome-encoded proteins, including at least some of the essential transmembrane subunits of the mitochondrial respiratory chain. The mitoribosomes are attached to the mitochondrial inner membrane and translation products are cotranslationally integrated into the membrane. The sequence is that of Small ribosomal subunit protein uS10m (mrp-10) from Neurospora crassa (strain ATCC 24698 / 74-OR23-1A / CBS 708.71 / DSM 1257 / FGSC 987).